The sequence spans 1189 residues: Disabled homolog 2-interacting protein (1189 aa).

A disordered region spans residues 1-75 (MSAGGNARKS…EPSASTPFRV (75 aa)). Positions 20–38 (LLRRPRLQRQRSRSRSRTR) are enriched in basic residues. The span at 39–49 (PARESPQERPG) shows a compositional bias: basic and acidic residues. Over residues 59-73 (SEKNPSMEPSASTPF) the composition is skewed to polar residues. The 102-residue stretch at 101 to 202 (SFRHILPGFR…WMENLRRAVH (102 aa)) folds into the PH domain. One can recognise a C2 domain in the interval 193 to 311 (WMENLRRAVH…AGRQFVEKWY (119 aa)). The 209-residue stretch at 387–595 (GKVKDFLTDL…TNMQRFLLEI (209 aa)) folds into the Ras-GAP domain. Residues 646–943 (LRDVHTALST…RTPPTLLSTL (298 aa)) are necessary for interaction with AKT1. Polar residues predominate over residues 653–668 (LSTPGSGQLPGTNDLA). Disordered stretches follow at residues 653-679 (LSTP…SSVS) and 715-738 (RSSG…PDLQ). A compositionally biased stretch (low complexity) spans 669 to 679 (STPGSGSSSVS). Residues 715–731 (RSSGVQPSPARSSSYSE) show a composition bias toward polar residues. S728 carries the post-translational modification Phosphoserine; by MAP3K5 and RIPK1. S747 carries the post-translational modification Phosphoserine. Disordered stretches follow at residues 804 to 823 (VPTP…PQLL), 843 to 865 (PRGL…NSEE), 895 to 998 (SLTE…SPNA), 1015 to 1034 (EDEG…SKEE), and 1163 to 1189 (ARNG…SSNC). Low complexity predominate over residues 852-865 (EGHSSLSSHSNSEE). The segment covering 919-931 (QPPPPPPPPPPAP) has biased composition (pro residues). Polar residues-rich tracts occupy residues 939 to 955 (LLST…TLAS) and 967 to 976 (LRQQSSSSKG). S978 and S995 each carry phosphoserine. The span at 1023–1034 (PPHRDRLRSKEE) shows a compositional bias: basic and acidic residues. Residues 1025–1159 (HRDRLRSKEE…SALTQLKERY (135 aa)) adopt a coiled-coil conformation.

In terms of assembly, on plasma membrane, exists in an inactive form complexed with TNFR1; in response to TNF-alpha, dissociates from TNFR1 complex, translocates to cytoplasm and forms part of an intracellular signaling complex comprising TRADD, RIPK1, TRAF2 and MAP3K5. Interacts with DAB1. Part of a cytoplasmic complex made of HIPK1, DAB2IP and MAP3K5 in response to TNF-alpha; this complex formation promotes MAP3K5-JNK activation and subsequent apoptosis. Interacts (via N-terminal domain) with JAK2; the interaction occurs in a IFNG/IFN-gamma-dependent manner and inhibits JAK2 autophosphorylation activity. Interacts (via C2 domain) with GSK3B; the interaction stimulates GSK3B kinase activation. Interacts (via C2 domain) with PPP2CA. Interacts (via proline-rich motif) with a regulatory p85 subunit (via SH3 domain) of the PI3K complex; the interaction inhibits the PI3K-AKT complex activity in a TNF-alpha-dependent manner in prostate cancer (PCa) cells. Interacts with AKT1; the interaction is increased in a TNF-alpha-induced manner. Interacts (via C2 domain and active form preferentially) with KDR/VEGFR2 (tyrosine-phosphorylated active form preferentially); the interaction occurs at the late phase of VEGFA response and inhibits KDR/VEGFR2 activity. Interacts (via N-terminus C2 domain) with MAP3K5 ('Ser-966' dephosphorylated form preferentially); the interaction occurs in a TNF-alpha-induced manner. Interacts (via Ras-GAP domain) with the catalytic subunit of protein phosphatase PP2A; the interaction occurs in resting endothelial cells, is further enhanced by TNF-alpha stimulation and is required to bridge PP2A to MAP3K5. Interacts (via C-terminus PER domain) with TRAF2 (via zinc fingers); the interaction occurs in a TNF-alpha-dependent manner. Interacts with 14-3-3 proteins; the interaction occurs in a TNF-alpha-dependent manner. Interacts (via Ras-GAP domain) with RIPK1 (via kinase domain); the interaction occurs in a TNF-alpha-dependent manner. Interacts (via PH domain) with ERN1. Interacts with TRAF2. Interacts (via NPXY motif) with DAB2 (via PID domain). Interacts with RAB40C; acts as a GAP for RAB40C. In terms of processing, in response to TNF-alpha-induction, phosphorylated at Ser-728; phosphorylation leads to a conformational change, and thus, increases its association with 14-3-3 proteins, MAP3K5, RIPK1 and TRAF2 in endothelial cells; also stimulates regulatory p85 subunit sequestring and PI3K-p85 complex activity inhibition. Expressed in vascular endothelium of muscle and aorta, in smooth muscle cells of aorta and epithelial cells of lung. Expressed throughout the brain, including olfactory bulb, hypothalamus, cerebellum and cerebral cortex. Expressed in the soma and processes of neurons in a variety of brain structures, including the developing cerebral cortex, CA1 pyramidal neurons and Purkinje cells. Poorly expressed in medulloblastoma cells compared to cerebellar precursor proliferating progenitor cells (at protein level). Highly expressed in the brain, salivary gland, and testis; moderate expression in kidney and heart. Low expression in the lung, seminal vesicle, ventral prostate, epididymis, liver, and bladder. Very low expression in the coagulation gland and skeleton muscles. Lowest expression seen in spleen.

Its subcellular location is the cytoplasm. It is found in the cell membrane. It localises to the membrane. The protein localises to the cell projection. The protein resides in the dendrite. Its function is as follows. Functions as a scaffold protein implicated in the regulation of a large spectrum of both general and specialized signaling pathways. Involved in several processes such as innate immune response, inflammation and cell growth inhibition, apoptosis, cell survival, angiogenesis, cell migration and maturation. Also plays a role in cell cycle checkpoint control; reduces G1 phase cyclin levels resulting in G0/G1 cell cycle arrest. Mediates signal transduction by receptor-mediated inflammatory signals, such as the tumor necrosis factor (TNF), interferon (IFN) or lipopolysaccharide (LPS). Modulates the balance between phosphatidylinositol 3-kinase (PI3K)-AKT-mediated cell survival and apoptosis stimulated kinase (MAP3K5)-JNK signaling pathways; sequesters both AKT1 and MAP3K5 and counterbalances the activity of each kinase by modulating their phosphorylation status in response to pro-inflammatory stimuli. Acts as a regulator of the endoplasmic reticulum (ER) unfolded protein response (UPR) pathway; specifically involved in transduction of the ER stress-response to the JNK cascade through ERN1. Mediates TNF-alpha-induced apoptosis activation by facilitating dissociation of inhibitor 14-3-3 from MAP3K5; recruits the PP2A phosphatase complex which dephosphorylates MAP3K5 on 'Ser-966', leading to the dissociation of 13-3-3 proteins and activation of the MAP3K5-JNK signaling pathway in endothelial cells. Also mediates TNF/TRAF2-induced MAP3K5-JNK activation, while it inhibits CHUK-NF-kappa-B signaling. Acts a negative regulator in the IFN-gamma-mediated JAK-STAT signaling cascade by inhibiting smooth muscle cell (VSMCs) proliferation and intimal expansion, and thus, prevents graft arteriosclerosis (GA). Acts as a GTPase-activating protein (GAP) for the ADP ribosylation factor 6 (ARF6) and Ras. Promotes hydrolysis of the ARF6-bound GTP and thus, negatively regulates phosphatidylinositol 4,5-bisphosphate (PIP2)-dependent TLR4-TIRAP-MyD88 and NF-kappa-B signaling pathways in endothelial cells in response to lipopolysaccharides (LPS). Binds specifically to phosphatidylinositol 4-phosphate (PtdIns4P) and phosphatidylinositol 3-phosphate (PtdIns3P). In response to vascular endothelial growth factor (VEGFA), acts as a negative regulator of the VEGFR2-PI3K-mediated angiogenic signaling pathway by inhibiting endothelial cell migration and tube formation. In the developing brain, promotes both the transition from the multipolar to the bipolar stage and the radial migration of cortical neurons from the ventricular zone toward the superficial layer of the neocortex in a glial-dependent locomotion process. Probable downstream effector of the Reelin signaling pathway; promotes Purkinje cell (PC) dendrites development and formation of cerebellar synapses. Also functions as a tumor suppressor protein in prostate cancer progression; prevents cell proliferation and epithelial-to-mesenchymal transition (EMT) through activation of the glycogen synthase kinase-3 beta (GSK3B)-induced beta-catenin and inhibition of PI3K-AKT and Ras-MAPK survival downstream signaling cascades, respectively. The protein is Disabled homolog 2-interacting protein (Dab2ip) of Mus musculus (Mouse).